A 63-amino-acid polypeptide reads, in one-letter code: Large ribosomal subunit protein bL32c (63 aa).

A disordered region spans residues 38-63; the sequence is RSFSGVSEHPKPKGFSRQQTNNRVLG. The segment covering 53 to 63 has biased composition (polar residues); it reads SRQQTNNRVLG.

It belongs to the bacterial ribosomal protein bL32 family.

It is found in the plastid. It localises to the chloroplast. This chain is Large ribosomal subunit protein bL32c (rpl32), found in Oryza sativa (Rice).